The primary structure comprises 374 residues: Queuine tRNA-ribosyltransferase (374 aa).

Asp89 serves as the catalytic Proton acceptor. Residues 89–93 (DSGGF), Asp143, Gln187, and Gly214 contribute to the substrate site. Positions 245 to 251 (GVGKPED) are RNA binding. Asp264 acts as the Nucleophile in catalysis. The tract at residues 269–273 (TRNAR) is RNA binding; important for wobble base 34 recognition. Zn(2+)-binding residues include Cys302, Cys304, Cys307, and His333.

Belongs to the queuine tRNA-ribosyltransferase family. As to quaternary structure, homodimer. Within each dimer, one monomer is responsible for RNA recognition and catalysis, while the other monomer binds to the replacement base PreQ1. The cofactor is Zn(2+).

It carries out the reaction 7-aminomethyl-7-carbaguanine + guanosine(34) in tRNA = 7-aminomethyl-7-carbaguanosine(34) in tRNA + guanine. It functions in the pathway tRNA modification; tRNA-queuosine biosynthesis. Functionally, catalyzes the base-exchange of a guanine (G) residue with the queuine precursor 7-aminomethyl-7-deazaguanine (PreQ1) at position 34 (anticodon wobble position) in tRNAs with GU(N) anticodons (tRNA-Asp, -Asn, -His and -Tyr). Catalysis occurs through a double-displacement mechanism. The nucleophile active site attacks the C1' of nucleotide 34 to detach the guanine base from the RNA, forming a covalent enzyme-RNA intermediate. The proton acceptor active site deprotonates the incoming PreQ1, allowing a nucleophilic attack on the C1' of the ribose to form the product. After dissociation, two additional enzymatic reactions on the tRNA convert PreQ1 to queuine (Q), resulting in the hypermodified nucleoside queuosine (7-(((4,5-cis-dihydroxy-2-cyclopenten-1-yl)amino)methyl)-7-deazaguanosine). The protein is Queuine tRNA-ribosyltransferase of Shewanella sp. (strain W3-18-1).